We begin with the raw amino-acid sequence, 1393 residues long: DNA-directed RNA polymerase subunit beta' (1393 aa).

Cys-70, Cys-72, Cys-85, and Cys-88 together coordinate Zn(2+). Mg(2+)-binding residues include Asp-461, Asp-463, and Asp-465. 4 residues coordinate Zn(2+): Cys-804, Cys-877, Cys-884, and Cys-887.

This sequence belongs to the RNA polymerase beta' chain family. In terms of assembly, the RNAP catalytic core consists of 2 alpha, 1 beta, 1 beta' and 1 omega subunit. When a sigma factor is associated with the core the holoenzyme is formed, which can initiate transcription. The cofactor is Mg(2+). Requires Zn(2+) as cofactor.

It catalyses the reaction RNA(n) + a ribonucleoside 5'-triphosphate = RNA(n+1) + diphosphate. Its function is as follows. DNA-dependent RNA polymerase catalyzes the transcription of DNA into RNA using the four ribonucleoside triphosphates as substrates. The sequence is that of DNA-directed RNA polymerase subunit beta' from Rhodospirillum rubrum (strain ATCC 11170 / ATH 1.1.1 / DSM 467 / LMG 4362 / NCIMB 8255 / S1).